We begin with the raw amino-acid sequence, 432 residues long: Glutamyl-tRNA reductase (432 aa).

Substrate contacts are provided by residues 49–52, Ser107, 112–114, and Gln118; these read TCNR and ETQ. Cys50 acts as the Nucleophile in catalysis. 186-191 is a binding site for NADP(+); sequence GAGEMG.

The protein belongs to the glutamyl-tRNA reductase family. As to quaternary structure, homodimer.

It carries out the reaction (S)-4-amino-5-oxopentanoate + tRNA(Glu) + NADP(+) = L-glutamyl-tRNA(Glu) + NADPH + H(+). It participates in porphyrin-containing compound metabolism; protoporphyrin-IX biosynthesis; 5-aminolevulinate from L-glutamyl-tRNA(Glu): step 1/2. Its function is as follows. Catalyzes the NADPH-dependent reduction of glutamyl-tRNA(Glu) to glutamate 1-semialdehyde (GSA). The chain is Glutamyl-tRNA reductase from Campylobacter jejuni subsp. jejuni serotype O:6 (strain 81116 / NCTC 11828).